A 492-amino-acid chain; its full sequence is Aerolysin-3 (492 aa).

Positions 1 to 23 (MKKLKITGLSLIISGLLMAQAQA) are cleaved as a signal peptide. 2 disulfides stabilise this stretch: cysteine 42-cysteine 98 and cysteine 182-cysteine 187. Residues 68 to 84 (WQISGLANGWVIMGPGY) form an interaction with host N-linked glycan region. Residues 256–288 (YGLSEKVTTKNKFKWPLVGETELSIEIAANQSW) are part of the transmembrane beta-barrel after proteolytic activation of the toxin and insertion into the host membrane. The segment at 346–355 (RWGGNAWYTH) is interaction with glycans from host GPI-anchor. Positions 446–492 (AAASHSSRARNLSAGQGLRLEIPLDAQELSGLGFNNVSLSVTPAANQ) are excised as a propeptide.

The protein belongs to the aerolysin family. Homodimer in solution; homoheptamer in the host membrane. After binding to GPI-anchored proteins in target membranes and proteolytic removal of the C-terminal propeptide, the protein assembles into a heptameric pre-pore complex. A further conformation change leads to insertion into the host membrane. Post-translationally, proteolytic cleavage and subsequent release of the propeptide trigger a major conformation change, leading to the formation of a heptameric pre-pore that then inserts into the host membrane.

The protein localises to the secreted. It localises to the host cell membrane. Its function is as follows. Secreted, cytolytic toxin that forms pores in host membranes after proteolytic removal of a C-terminal propeptide, leading to destruction of the membrane permeability barrier and cell death. The pores are formed by transmembrane beta-strands and are approximately 3 nm in diameter. The polypeptide is Aerolysin-3 (ahh3) (Aeromonas hydrophila).